A 123-amino-acid polypeptide reads, in one-letter code: Small ribosomal subunit protein bS16 (123 aa).

The protein belongs to the bacterial ribosomal protein bS16 family.

The protein is Small ribosomal subunit protein bS16 of Treponema pallidum (strain Nichols).